We begin with the raw amino-acid sequence, 91 residues long: Aspartyl/glutamyl-tRNA(Asn/Gln) amidotransferase subunit C (91 aa).

The disordered stretch occupies residues 68–91 (LDQDDALANAPETEDGRFKGPNVS).

The protein belongs to the GatC family. As to quaternary structure, heterotrimer of A, B and C subunits.

It catalyses the reaction L-glutamyl-tRNA(Gln) + L-glutamine + ATP + H2O = L-glutaminyl-tRNA(Gln) + L-glutamate + ADP + phosphate + H(+). It carries out the reaction L-aspartyl-tRNA(Asn) + L-glutamine + ATP + H2O = L-asparaginyl-tRNA(Asn) + L-glutamate + ADP + phosphate + 2 H(+). Allows the formation of correctly charged Asn-tRNA(Asn) or Gln-tRNA(Gln) through the transamidation of misacylated Asp-tRNA(Asn) or Glu-tRNA(Gln) in organisms which lack either or both of asparaginyl-tRNA or glutaminyl-tRNA synthetases. The reaction takes place in the presence of glutamine and ATP through an activated phospho-Asp-tRNA(Asn) or phospho-Glu-tRNA(Gln). The chain is Aspartyl/glutamyl-tRNA(Asn/Gln) amidotransferase subunit C from Halobacterium salinarum (strain ATCC 29341 / DSM 671 / R1).